The sequence spans 840 residues: Phosphatidylglycerol lysyltransferase (840 aa).

Residues 1 to 8 are Cytoplasmic-facing; the sequence is MNQEVKNK. A helical membrane pass occupies residues 9 to 29; the sequence is IFSILKITFATALFIFVAITL. Residues 30-52 are Extracellular-facing; sequence YRELSGINFKDTLVEFSKINRMS. The chain crosses the membrane as a helical span at residues 53-73; it reads LVLLFIGGGASLVILSMYDVI. Topologically, residues 74 to 89 are cytoplasmic; the sequence is LSRALKMDISLGKVLR. The helical transmembrane segment at 90 to 110 threads the bilayer; it reads VSYIINALNAIVGFGGFIGAG. At 111 to 128 the chain is on the extracellular side; that stretch reads VRAMVYKNYTHDKKKLVH. Residues 129–149 traverse the membrane as a helical segment; the sequence is FISLILISMLTGLSLLSLLIV. The Cytoplasmic segment spans residues 150–161; sequence FHVFDASLILDK. A helical transmembrane segment spans residues 162–182; sequence ITWVRWVLYVVSFFLPLFIIY. Over 183–200 the chain is Extracellular; it reads SMVRPPDKNNRFVGLYCT. A helical membrane pass occupies residues 201–221; sequence LVSCVEWLAAAVVLYFCGVIV. The Cytoplasmic portion of the chain corresponds to 222 to 229; the sequence is DAHVSFMS. The helical transmembrane segment at 230 to 250 threads the bilayer; sequence FIAIFIIAALSGLVSFIPGGF. At 251–271 the chain is on the extracellular side; it reads GAFDLVVLLGFKTLGVPEEKV. The chain crosses the membrane as a helical span at residues 272–292; the sequence is LLMLLLYRFAYYFVPVIIALI. Over 293 to 337 the chain is Cytoplasmic; that stretch reads LSSFEFGTSAKKYIEGSKYFIPAKDVTSFLMSYQKDIIAKIPSLS. A helical transmembrane segment spans residues 338 to 358; it reads LAILVFFTSMIFFVNNLTIVY. The Extracellular segment spans residues 359-369; sequence DALYDGNHLTY. The chain crosses the membrane as a helical span at residues 370-390; the sequence is YILLAIHTSACLLLLLNVVGI. Topologically, residues 391–394 are cytoplasmic; sequence YKQS. Helical transmembrane passes span 395 to 415 and 416 to 436; these read RRAI…TFFT and YASY…IVAF. Topologically, residues 437–450 are cytoplasmic; sequence RRARRLKRPVRMRN. The helical transmembrane segment at 451 to 471 threads the bilayer; the sequence is IVAMLLFSLFILYVNHIFIAG. Residues 472–489 are Extracellular-facing; sequence TLYALDIYTIEMHTSVLR. Residues 490–510 traverse the membrane as a helical segment; sequence YYFWLTILIIAIIIGMIAWLF. At 511–840 the chain is on the cytoplasmic side; that stretch reads DYQFSKVRIS…SKVMRVIRHK (330 aa).

This sequence belongs to the LPG synthase family.

It is found in the cell membrane. The catalysed reaction is L-lysyl-tRNA(Lys) + a 1,2-diacyl-sn-glycero-3-phospho-(1'-sn-glycerol) = a 1,2-diacyl-sn-glycero-3-phospho-1'-(3'-O-L-lysyl)-sn-glycerol + tRNA(Lys). Functionally, catalyzes the transfer of a lysyl group from L-lysyl-tRNA(Lys) to membrane-bound phosphatidylglycerol (PG), which produces lysylphosphatidylglycerol (LPG), a major component of the bacterial membrane with a positive net charge. LPG synthesis contributes to bacterial virulence as it is involved in the resistance mechanism against cationic antimicrobial peptides (CAMP) produces by the host's immune system (defensins, cathelicidins) and by the competing microorganisms (bacteriocins). In fact, the modification of anionic phosphatidylglycerol with positively charged L-lysine results in repulsion of the peptides. The protein is Phosphatidylglycerol lysyltransferase (mprF) of Staphylococcus aureus (strain Mu50 / ATCC 700699).